Reading from the N-terminus, the 234-residue chain is MQNFPPVEWAVSDAPVPYEAALAVMEARARAIREDGAPELVWFLEHPPLYTAGTSARIEDLKDPARFPVFEAGRGGQYTYHGPGQRVAYVMLDVAARGRDVRAFVAHLEAWIIQALAAFNVEGGMRDGRVGVWVDRTEPGGPPREDKIAAIGVRLKRWVSFHGISLNVEPELDHFTGITPCGIADPRYGVTSLADLGRIISMEEADIALKAAFQQVFASPLVRVDPPVTGSVPA.

Residues 35–221 enclose the BPL/LPL catalytic domain; the sequence is DGAPELVWFL…AFQQVFASPL (187 aa). Residues 74–81, 150–152, and 163–165 contribute to the substrate site; these read RGGQYTYH, AIG, and GIS. The active-site Acyl-thioester intermediate is the C181.

This sequence belongs to the LipB family.

It is found in the cytoplasm. It carries out the reaction octanoyl-[ACP] + L-lysyl-[protein] = N(6)-octanoyl-L-lysyl-[protein] + holo-[ACP] + H(+). It functions in the pathway protein modification; protein lipoylation via endogenous pathway; protein N(6)-(lipoyl)lysine from octanoyl-[acyl-carrier-protein]: step 1/2. Its function is as follows. Catalyzes the transfer of endogenously produced octanoic acid from octanoyl-acyl-carrier-protein onto the lipoyl domains of lipoate-dependent enzymes. Lipoyl-ACP can also act as a substrate although octanoyl-ACP is likely to be the physiological substrate. This Hyphomonas neptunium (strain ATCC 15444) protein is Octanoyltransferase.